Here is a 129-residue protein sequence, read N- to C-terminus: Large ribosomal subunit protein eL32 (129 aa).

Belongs to the eukaryotic ribosomal protein eL32 family.

The protein is Large ribosomal subunit protein eL32 (rpl32e) of Methanosarcina mazei (strain ATCC BAA-159 / DSM 3647 / Goe1 / Go1 / JCM 11833 / OCM 88) (Methanosarcina frisia).